Here is a 72-residue protein sequence, read N- to C-terminus: Large ribosomal subunit protein uL30 (72 aa).

The protein belongs to the universal ribosomal protein uL30 family. In terms of assembly, part of the 50S ribosomal subunit.

In Mycobacterium ulcerans (strain Agy99), this protein is Large ribosomal subunit protein uL30.